Consider the following 414-residue polypeptide: Myb1 protein (414 aa).

Myb-like domains are found at residues 242 to 266 (WNEVSEKLSNNQNAKECQKMWLYYG), 268 to 320 (FEDD…IKIN), and 328 to 381 (KVKL…TNLN).

The protein localises to the nucleus. In terms of biological role, transcriptional activator. Has a role in the parasite erythrocytic cycle where it directly regulates key genes involved in cell cycle regulation and progression. Binds directly to Myb regulatory elements. The chain is Myb1 protein from Plasmodium falciparum (isolate 3D7).